The chain runs to 153 residues: MAHPLVPQIIDLATPVAEELGLEVVGVVFHTHQSPPVLRVDIRNPQQDTGLNDCERMSRALEASLDAAEIVPDTYVLEVSSPGISRQLVTDREFISFKGFPVIISTTPPYDGQQEWIGQLIRRDEITLYLNQKGRVVEIPRSLITKVQLDERR.

This sequence belongs to the RimP family.

The protein localises to the cytoplasm. In terms of biological role, required for maturation of 30S ribosomal subunits. This Nostoc punctiforme (strain ATCC 29133 / PCC 73102) protein is Ribosome maturation factor RimP.